Consider the following 268-residue polypeptide: Nickel import ATP-binding protein NikE (268 aa).

Positions 4 to 252 constitute an ABC transporter domain; the sequence is LNVSDLSHHY…SSDAGRVLQN (249 aa). ATP is bound at residue 45–52; sequence GRSGCGKS.

It belongs to the ABC transporter superfamily. Nickel importer (TC 3.A.1.5.3) family. In terms of assembly, the complex is composed of two ATP-binding proteins (NikD and NikE), two transmembrane proteins (NikB and NikC) and a solute-binding protein (NikA).

The protein resides in the cell inner membrane. The catalysed reaction is Ni(2+)(out) + ATP + H2O = Ni(2+)(in) + ADP + phosphate + H(+). Functionally, part of the ABC transporter complex NikABCDE involved in nickel import. Responsible for energy coupling to the transport system. The polypeptide is Nickel import ATP-binding protein NikE (Escherichia coli O157:H7).